The primary structure comprises 420 residues: Tyrosine--tRNA ligase 2 (420 aa).

Residue Tyr-34 participates in L-tyrosine binding. Residues 39–48 (PTGDSMHIGH) carry the 'HIGH' region motif. Tyr-168 and Gln-172 together coordinate L-tyrosine. Positions 230–234 (KFGKS) match the 'KMSKS' region motif. Lys-233 contributes to the ATP binding site. The S4 RNA-binding domain maps to 352-418 (KNIVEWLVDL…GKKNYSLVKL (67 aa)).

The protein belongs to the class-I aminoacyl-tRNA synthetase family. TyrS type 1 subfamily. In terms of assembly, homodimer.

It localises to the cytoplasm. The catalysed reaction is tRNA(Tyr) + L-tyrosine + ATP = L-tyrosyl-tRNA(Tyr) + AMP + diphosphate + H(+). In terms of biological role, catalyzes the attachment of tyrosine to tRNA(Tyr) in a two-step reaction: tyrosine is first activated by ATP to form Tyr-AMP and then transferred to the acceptor end of tRNA(Tyr). This is Tyrosine--tRNA ligase 2 from Bacillus cereus (strain ATCC 14579 / DSM 31 / CCUG 7414 / JCM 2152 / NBRC 15305 / NCIMB 9373 / NCTC 2599 / NRRL B-3711).